We begin with the raw amino-acid sequence, 305 residues long: Oxygen-dependent coproporphyrinogen-III oxidase (305 aa).

Substrate is bound at residue Ser-98. The a divalent metal cation site is built by His-102 and His-112. Residue His-112 is the Proton donor of the active site. 114-116 (NVR) provides a ligand contact to substrate. A divalent metal cation contacts are provided by His-151 and His-181. Residues 246 to 281 (YVEFNLVYDRGTLFGLQSGGRTESILMSMPPLARWE) form an important for dimerization region. Substrate is bound at residue 264–266 (GGR).

It belongs to the aerobic coproporphyrinogen-III oxidase family. Homodimer. The cofactor is a divalent metal cation.

The protein resides in the cytoplasm. The catalysed reaction is coproporphyrinogen III + O2 + 2 H(+) = protoporphyrinogen IX + 2 CO2 + 2 H2O. Its pathway is porphyrin-containing compound metabolism; protoporphyrin-IX biosynthesis; protoporphyrinogen-IX from coproporphyrinogen-III (O2 route): step 1/1. In terms of biological role, involved in the heme biosynthesis. Catalyzes the aerobic oxidative decarboxylation of propionate groups of rings A and B of coproporphyrinogen-III to yield the vinyl groups in protoporphyrinogen-IX. The polypeptide is Oxygen-dependent coproporphyrinogen-III oxidase (Vibrio campbellii (strain ATCC BAA-1116)).